A 246-amino-acid polypeptide reads, in one-letter code: Zinc import ATP-binding protein ZnuC (246 aa).

One can recognise an ABC transporter domain in the interval 24–244 (LKIENLALAY…TLGEIFSSYI (221 aa)). 56-63 (GPNGGGKT) serves as a coordination point for ATP.

Belongs to the ABC transporter superfamily. Zinc importer (TC 3.A.1.15.5) family. In terms of assembly, the complex is composed of two ATP-binding proteins (ZnuC), two transmembrane proteins (ZnuB) and a solute-binding protein (ZnuA).

It is found in the cell membrane. It catalyses the reaction Zn(2+)(out) + ATP(in) + H2O(in) = Zn(2+)(in) + ADP(in) + phosphate(in) + H(+)(in). Part of the ABC transporter complex ZnuABC involved in zinc import. Responsible for energy coupling to the transport system. The sequence is that of Zinc import ATP-binding protein ZnuC from Wolbachia sp. subsp. Brugia malayi (strain TRS).